We begin with the raw amino-acid sequence, 281 residues long: MAGVCAVKVGIIGGSGLDDPDILEGRLEKYVDTPFGKPSDALVLGKIKNVDCVLLASRHGRQHTIAPTNVNYRANIWALKSEGCTHILVTTACGSLREEIQPGDIVIVDQFIDRTTKREQTFYDGGPSCLPGVCHIPMAEPFCAKTREVLIDIAKRLGIKCHSKGAMITIEGPRFSSKAESQMFRLWGADVINMTTVPEVILAKEAGICYASIAMATDYDCWKEHEEAVSVDRVLKTLKENANKATSILLTAIPQIAAMDWTELLQSMKSTVQLSVMLPKH.

Phosphate-binding positions include Ser15, 58 to 59, and 91 to 92; these read RH and TA. Met194 contacts substrate. Thr195 serves as a coordination point for phosphate. 218–220 provides a ligand contact to substrate; the sequence is DYD.

Belongs to the PNP/MTAP phosphorylase family. MTAP subfamily. In terms of assembly, homotrimer.

It is found in the cytoplasm. The protein resides in the nucleus. The enzyme catalyses S-methyl-5'-thioadenosine + phosphate = 5-(methylsulfanyl)-alpha-D-ribose 1-phosphate + adenine. The protein operates within amino-acid biosynthesis; L-methionine biosynthesis via salvage pathway; S-methyl-5-thio-alpha-D-ribose 1-phosphate from S-methyl-5'-thioadenosine (phosphorylase route): step 1/1. Catalyzes the reversible phosphorylation of S-methyl-5'-thioadenosine (MTA) to adenine and 5-methylthioribose-1-phosphate. Involved in the breakdown of MTA, a major by-product of polyamine biosynthesis. Responsible for the first step in the methionine salvage pathway after MTA has been generated from S-adenosylmethionine. Has broad substrate specificity with 6-aminopurine nucleosides as preferred substrates. This chain is S-methyl-5'-thioadenosine phosphorylase (mtap), found in Xenopus tropicalis (Western clawed frog).